Reading from the N-terminus, the 488-residue chain is Catalase (488 aa).

The segment at 1-24 is disordered; the sequence is MTDRRNLTTNQGVPIGDNQNSMTA. Over residues 7–23 the composition is skewed to polar residues; it reads LTTNQGVPIGDNQNSMT. Residues H55 and N128 contribute to the active site. Y338 contributes to the heme binding site.

The protein belongs to the catalase family. The cofactor is heme.

It localises to the cytoplasm. It carries out the reaction 2 H2O2 = O2 + 2 H2O. Functionally, decomposes hydrogen peroxide into water and oxygen; serves to protect cells from the toxic effects of hydrogen peroxide. The chain is Catalase (kat) from Listeria seeligeri.